The following is a 556-amino-acid chain: Urocanate hydratase (556 aa).

NAD(+)-binding positions include 52 to 53 (GG), Q130, 176 to 178 (GMG), E196, R201, 242 to 243 (NA), 263 to 267 (QTSAH), 273 to 274 (YL), and Y322. The active site involves C410. NAD(+) is bound at residue G492.

It belongs to the urocanase family. NAD(+) serves as cofactor.

The protein resides in the cytoplasm. It carries out the reaction 4-imidazolone-5-propanoate = trans-urocanate + H2O. The protein operates within amino-acid degradation; L-histidine degradation into L-glutamate; N-formimidoyl-L-glutamate from L-histidine: step 2/3. Its function is as follows. Catalyzes the conversion of urocanate to 4-imidazolone-5-propionate. The sequence is that of Urocanate hydratase from Bradyrhizobium sp. (strain BTAi1 / ATCC BAA-1182).